The sequence spans 212 residues: MGSSSGQPEFDYLFKVLLIGDSGVGKSSLLLSFTSNTFDDLSPTIGVDFKVKYLTIGEKKLKLAIWDTAGQERFRTLTSSYYRGAQGIIMVYDVTRRDTFTNLSDIWAKEIDLYSTNQDCIKMLVGNKVDKESERAVSKKEGIDFAREYGCLFLECSAKTRVNVEQCFEELVLKILETPSLTAEGSSGGKKNIFKQNPAQTTSTSSSYCCSS.

G2 is subject to N-acetylglycine. Residue 20–27 (GDSGVGKS) participates in GTP binding. Residues 41–49 (LSPTIGVDF) carry the Effector region motif. Residues 67 to 71 (DTAGQ), 127 to 130 (NKVD), and 157 to 158 (SA) each bind GTP. The tract at residues 182–212 (TAEGSSGGKKNIFKQNPAQTTSTSSSYCCSS) is disordered. Positions 201–212 (TTSTSSSYCCSS) are enriched in low complexity. Residues C209 and C210 are each lipidated (S-geranylgeranyl cysteine).

Belongs to the small GTPase superfamily. Rab family.

It localises to the cell membrane. Functionally, intracellular vesicle trafficking and protein transport. The polypeptide is Ras-related protein RABC1 (RABC1) (Arabidopsis thaliana (Mouse-ear cress)).